Here is a 1062-residue protein sequence, read N- to C-terminus: Cell division control protein 7 (1062 aa).

The region spanning 9-259 (ITLGDCLGKG…TRKLLKHPWV (251 aa)) is the Protein kinase domain. ATP-binding positions include 15–23 (LGKGAFGAV) and K38. The active-site Proton acceptor is D131. Polar residues-rich tracts occupy residues 296 to 310 (NRINPTLHSGRQSSY) and 376 to 394 (AFNSDQISESNNFNASPLS). 3 disordered regions span residues 296–331 (NRINPTLHSGRQSSYHMPESPKTPIAESPDHDNWDN), 361–394 (NNSSSITSSPSKSRHAFNSDQISESNNFNASPLS), and 1038–1062 (NEHKSPISKPHMPPPRWQPKQPLTQ).

Belongs to the protein kinase superfamily. Ser/Thr protein kinase family. CDC7 subfamily. Interacts with spg1. Seems to interact with cdc11. It depends on Mg(2+) as a cofactor.

The enzyme catalyses L-seryl-[protein] + ATP = O-phospho-L-seryl-[protein] + ADP + H(+). The catalysed reaction is L-threonyl-[protein] + ATP = O-phospho-L-threonyl-[protein] + ADP + H(+). In terms of biological role, protein kinase essential for cell division. Plays a key role in initiation of septum formation and cytokinesis. The sequence is that of Cell division control protein 7 (cdc7) from Schizosaccharomyces pombe (strain 972 / ATCC 24843) (Fission yeast).